The following is a 662-amino-acid chain: Probable quinol oxidase subunit 1 (662 aa).

The next 2 helical transmembrane spans lie at 14–34 (WMIT…IAVI) and 58–78 (VMYL…ALLI). Residue His102 coordinates Fe(II)-heme a. The next 8 membrane-spanning stretches (helical) occupy residues 103–123 (GVIM…NIVV), 140–160 (VSFW…IIGG), 187–207 (IAIQ…FVTI), 228–248 (FITT…LALM), 273–293 (FFWV…FGIY), 311–331 (MVWA…HHFF), 336–356 (GALI…PTGV), and 376–396 (MLFS…GVML). 4 residues coordinate Cu cation: His279, Tyr283, His328, and His329. The 1'-histidyl-3'-tyrosine (His-Tyr) cross-link spans 279-283 (HPEVY). Residue His414 participates in heme a3 binding. Transmembrane regions (helical) follow at residues 415–435 (FHYT…IFWY), 451–471 (CFWF…ILGL), 493–513 (ISTI…VSIV), 587–604 (PVGF…FFLI), and 608–627 (VIPA…YRSF). His416 serves as a coordination point for Fe(II)-heme a.

The protein belongs to the heme-copper respiratory oxidase family. Cu cation is required as a cofactor. Ferriheme a serves as cofactor. Requires Heme A3. as cofactor.

The protein resides in the cell membrane. The catalysed reaction is 2 a quinol + O2 = 2 a quinone + 2 H2O. It participates in energy metabolism; oxidative phosphorylation. In terms of biological role, catalyzes quinol oxidation with the concomitant reduction of oxygen to water. The protein is Probable quinol oxidase subunit 1 (qoxB) of Staphylococcus aureus (strain COL).